Here is a 166-residue protein sequence, read N- to C-terminus: Large ribosomal subunit protein mL49 (166 aa).

A disordered region spans residues 54–77; sequence PTKIPEPPKHKHYPTPSGWQPPRD.

Belongs to the mitochondrion-specific ribosomal protein mL49 family. In terms of assembly, component of the mitochondrial ribosome large subunit (39S) which comprises a 16S rRNA and about 50 distinct proteins. Interacts with OXA1L.

The protein localises to the mitochondrion. The sequence is that of Large ribosomal subunit protein mL49 (Mrpl49) from Mus musculus (Mouse).